The chain runs to 139 residues: Large ribosomal subunit protein uL16 (139 aa).

Over residues 1-16 (MLIPKRTKYRKQHRPV) the composition is skewed to basic residues. Residues 1 to 22 (MLIPKRTKYRKQHRPVRSGMSK) are disordered.

It belongs to the universal ribosomal protein uL16 family. In terms of assembly, part of the 50S ribosomal subunit.

Its function is as follows. Binds 23S rRNA and is also seen to make contacts with the A and possibly P site tRNAs. This chain is Large ribosomal subunit protein uL16, found in Bifidobacterium longum subsp. infantis (strain ATCC 15697 / DSM 20088 / JCM 1222 / NCTC 11817 / S12).